The following is a 161-amino-acid chain: 4-hydroxybenzoyl-CoA reductase subunit gamma (161 aa).

The 77-residue stretch at 3 to 79 folds into the 2Fe-2S ferredoxin-type domain; the sequence is NILRLTLNGR…GKKVETVESL (77 aa). Residues Cys41, Cys46, Cys49, Cys61, Cys100, Cys103, Cys135, and Cys137 each coordinate [2Fe-2S] cluster.

As to quaternary structure, heterohexamer of two alpha, two beta and two gamma subunits. It depends on [2Fe-2S] cluster as a cofactor.

It carries out the reaction oxidized 2[4Fe-4S]-[ferredoxin] + benzoyl-CoA + H2O = 4-hydroxybenzoyl-CoA + reduced 2[4Fe-4S]-[ferredoxin] + 2 H(+). Inactivated by low concentrations of cyanide in vitro. Its function is as follows. Component of a complex that catalyzes the reductive dehydroxylation of 4-hydroxybenzoyl-CoA to benzoyl-CoA. Reaction is not reversible. Is a key enzyme in the anaerobic degradation of phenolic compounds. The protein is 4-hydroxybenzoyl-CoA reductase subunit gamma (hcrC) of Thauera aromatica.